Consider the following 191-residue polypeptide: Threonylcarbamoyl-AMP synthase (191 aa).

Residues 7–191 (QSELNDALKI…FHASTGKRLR (185 aa)) enclose the YrdC-like domain.

Belongs to the SUA5 family. TsaC subfamily.

Its subcellular location is the cytoplasm. The catalysed reaction is L-threonine + hydrogencarbonate + ATP = L-threonylcarbamoyladenylate + diphosphate + H2O. Functionally, required for the formation of a threonylcarbamoyl group on adenosine at position 37 (t(6)A37) in tRNAs that read codons beginning with adenine. Catalyzes the conversion of L-threonine, HCO(3)(-)/CO(2) and ATP to give threonylcarbamoyl-AMP (TC-AMP) as the acyladenylate intermediate, with the release of diphosphate. The chain is Threonylcarbamoyl-AMP synthase from Psychromonas ingrahamii (strain DSM 17664 / CCUG 51855 / 37).